Here is a 408-residue protein sequence, read N- to C-terminus: Serine/threonine transporter SstT (408 aa).

Transmembrane regions (helical) follow at residues 11 to 31 (LANG…VSLA), 43 to 63 (FLGS…VFIL), 82 to 102 (IVVL…LLSM), 141 to 161 (ALMT…GLAL), 192 to 212 (IGIF…AIAG), 216 to 236 (LLAV…PLIV), 298 to 318 (MGGA…TLGI), 339 to 359 (ASGV…LFGI), and 363 to 383 (VAMQ…AAET).

The protein belongs to the dicarboxylate/amino acid:cation symporter (DAACS) (TC 2.A.23) family.

The protein resides in the cell inner membrane. It carries out the reaction L-serine(in) + Na(+)(in) = L-serine(out) + Na(+)(out). It catalyses the reaction L-threonine(in) + Na(+)(in) = L-threonine(out) + Na(+)(out). Functionally, involved in the import of serine and threonine into the cell, with the concomitant import of sodium (symport system). The protein is Serine/threonine transporter SstT of Shewanella sp. (strain MR-7).